A 610-amino-acid chain; its full sequence is Solute carrier family 2, facilitated glucose transporter member 12 (610 aa).

Residues 1–49 lie on the Cytoplasmic side of the membrane; the sequence is MDAPEESIRMTSDPQSKIYVQNPDTHIHLEQGPSAKSGNGRALVLCSVS. The helical transmembrane segment at 50–70 threads the bilayer; sequence VACLSGLLMGYEMSLISGALL. Over 71–84 the chain is Extracellular; it reads QLRDVLTLSCPEQE. Residues 85–105 traverse the membrane as a helical segment; sequence QVVGSLLLGAFLLSLGGGTIL. At 106–118 the chain is on the cytoplasmic side; sequence DHYGRRFTIILTA. Residues 119–139 form a helical membrane-spanning segment; the sequence is LLCVLGTLLSVCVVSFWALVV. At 140 to 141 the chain is on the extracellular side; sequence GR. A helical membrane pass occupies residues 142–162; sequence MLVGMSVALSGTASCLYAAEV. Topologically, residues 163–176 are cytoplasmic; the sequence is APAAWRGRCVCVYE. The helical transmembrane segment at 177–197 threads the bilayer; that stretch reads LMVVLGMLLGFGLSWAFAGVP. The Extracellular portion of the chain corresponds to 198 to 201; sequence DGWR. A helical transmembrane segment spans residues 202–222; it reads FTFGGALLPALLQAGVMPLLP. At 223 to 286 the chain is on the cytoplasmic side; sequence DSPRFLLAQQ…FQSRDNMLQR (64 aa). The helical transmembrane segment at 287-307 threads the bilayer; it reads LLVGAALVFLQQATGQPNILA. Residues 308-325 are Extracellular-facing; the sequence is YASTVLSSVGFHGNEAAT. The chain crosses the membrane as a helical span at residues 326–346; sequence LASTGFGVVKVGGTIPAIFLV. Residues 347-353 lie on the Cytoplasmic side of the membrane; it reads DKVGPKA. Residues 354–374 form a helical membrane-spanning segment; that stretch reads LLCVGVVVMMLSTATLGAITM. Residues 375 to 475 are Extracellular-facing; sequence QSRTHVSSLC…LHEVSPSLKW (101 aa). N-linked (GlcNAc...) asparagine glycosylation is found at Asn-392, Asn-429, and Asn-438. The chain crosses the membrane as a helical span at residues 476 to 496; the sequence is ISLVSLLVYVAGFSISLGPMV. Residues 497–511 lie on the Cytoplasmic side of the membrane; that stretch reads HVVLSAIFPTGIRGK. A helical membrane pass occupies residues 512-532; the sequence is AVSVISAFNWATNLLISMTFL. Residues 533–542 lie on the Extracellular side of the membrane; that stretch reads TLTERIGLPT. A helical transmembrane segment spans residues 543–563; it reads VIFSYSAMSFLLVVFVIVFVP. Residues 564 to 610 are Cytoplasmic-facing; the sequence is ETKGRSLEQISKELAMKNHLRGTLLCHRRKHKATAQPSQEEKALATV.

The protein belongs to the major facilitator superfamily. Sugar transporter (TC 2.A.1.1) family. Glucose transporter subfamily. In terms of tissue distribution, expressed in the main insulin-sensitive tissues, such as cardiac muscle, skeletal muscle and adipose tissue.

Its subcellular location is the cell membrane. The protein localises to the endomembrane system. It localises to the cytoplasm. It is found in the perinuclear region. The enzyme catalyses D-glucose(out) = D-glucose(in). Its function is as follows. Insulin-regulated facilitative glucose transporter. The chain is Solute carrier family 2, facilitated glucose transporter member 12 from Danio rerio (Zebrafish).